The following is a 536-amino-acid chain: Glutamyl-tRNA(Gln) amidotransferase subunit B, mitochondrial (536 aa).

Residues 1–8 (MLRVHRLY) constitute a mitochondrion transit peptide.

It belongs to the GatB/GatE family. GatB subfamily. As to quaternary structure, subunit of the heterotrimeric GatFAB amidotransferase (AdT) complex, composed of A, B and F subunits.

The protein resides in the mitochondrion. It catalyses the reaction L-glutamyl-tRNA(Gln) + L-glutamine + ATP + H2O = L-glutaminyl-tRNA(Gln) + L-glutamate + ADP + phosphate + H(+). Functionally, allows the formation of correctly charged Gln-tRNA(Gln) through the transamidation of misacylated Glu-tRNA(Gln) in the mitochondria. The reaction takes place in the presence of glutamine and ATP through an activated gamma-phospho-Glu-tRNA(Gln). The chain is Glutamyl-tRNA(Gln) amidotransferase subunit B, mitochondrial from Eremothecium gossypii (strain ATCC 10895 / CBS 109.51 / FGSC 9923 / NRRL Y-1056) (Yeast).